The chain runs to 152 residues: Large ribosomal subunit protein uL30 (152 aa).

Belongs to the universal ribosomal protein uL30 family. In terms of assembly, part of the 50S ribosomal subunit.

The sequence is that of Large ribosomal subunit protein uL30 from Archaeoglobus fulgidus (strain ATCC 49558 / DSM 4304 / JCM 9628 / NBRC 100126 / VC-16).